Reading from the N-terminus, the 89-residue chain is Small ribosomal subunit protein uS15 (89 aa).

This sequence belongs to the universal ribosomal protein uS15 family. As to quaternary structure, part of the 30S ribosomal subunit. Forms a bridge to the 50S subunit in the 70S ribosome, contacting the 23S rRNA.

Its function is as follows. One of the primary rRNA binding proteins, it binds directly to 16S rRNA where it helps nucleate assembly of the platform of the 30S subunit by binding and bridging several RNA helices of the 16S rRNA. Functionally, forms an intersubunit bridge (bridge B4) with the 23S rRNA of the 50S subunit in the ribosome. In Aliivibrio fischeri (strain ATCC 700601 / ES114) (Vibrio fischeri), this protein is Small ribosomal subunit protein uS15.